We begin with the raw amino-acid sequence, 1166 residues long: Peroxisomal ATPase PEX6 (1166 aa).

It belongs to the AAA ATPase family. Interacts with PEX1; forming the PEX1-PEX6 AAA ATPase complex, which is composed of a heterohexamer formed by a trimer of PEX1-PEX6 dimers.

The protein resides in the membrane. It carries out the reaction ATP + H2O = ADP + phosphate + H(+). In terms of biological role, component of the PEX1-PEX6 AAA ATPase complex involved in peroxisome biosynthesis. The complex acts as a protein dislocase complex that mediates the ATP-dependent extraction of the PEX5 receptor from peroxisomal membranes, an essential step for PEX5 recycling. Specifically recognizes PEX5 monoubiquitinated at 'Cys-6', and pulls it out of the peroxisome lumen through the PEX2-PEX10-PEX12 retrotranslocation channel. Extraction by the PEX1-PEX6 AAA ATPase complex is accompanied by unfolding of the TPR repeats and release of bound cargo from PEX5. This chain is Peroxisomal ATPase PEX6, found in Komagataella phaffii (strain GS115 / ATCC 20864) (Yeast).